The following is a 277-amino-acid chain: MKITAEMIKELRQQTHAGMIACKQALEKTEGNLQKAIVFLREKGIVKASQKQDRTTSEGLINIVFSQNDAFLYELNSETDFVAKNEHFQQLMKTIGEVILQNKLQSVDEVLTFNYQNKTIQDLLLEKTSILGEKITLKRILKVTKKEEEIFGTYKHQGGRISVLVVLENNHPSIAEDIAMHIAAFNPKFLNPDKVNLQFLTTEKNILQKQTEKQLLEEKKPLHILDKIVQNRLNKLLKEICLSEQPFVKNNEQKVKDYLQNNNTNVVSYFRWSIANQ.

An involved in Mg(2+) ion dislocation from EF-Tu region spans residues 79 to 82 (TDFV).

Belongs to the EF-Ts family.

It localises to the cytoplasm. In terms of biological role, associates with the EF-Tu.GDP complex and induces the exchange of GDP to GTP. It remains bound to the aminoacyl-tRNA.EF-Tu.GTP complex up to the GTP hydrolysis stage on the ribosome. This is Elongation factor Ts from Phytoplasma australiense.